The sequence spans 425 residues: tRNA(Ile)-lysidine synthase (425 aa).

Residue 37-42 (SGGKDS) participates in ATP binding.

It belongs to the tRNA(Ile)-lysidine synthase family.

The protein localises to the cytoplasm. The catalysed reaction is cytidine(34) in tRNA(Ile2) + L-lysine + ATP = lysidine(34) in tRNA(Ile2) + AMP + diphosphate + H(+). In terms of biological role, ligates lysine onto the cytidine present at position 34 of the AUA codon-specific tRNA(Ile) that contains the anticodon CAU, in an ATP-dependent manner. Cytidine is converted to lysidine, thus changing the amino acid specificity of the tRNA from methionine to isoleucine. This Leptospira borgpetersenii serovar Hardjo-bovis (strain JB197) protein is tRNA(Ile)-lysidine synthase.